The following is a 63-amino-acid chain: Large ribosomal subunit protein eL37 (63 aa).

C20, C23, C35, and C38 together coordinate Zn(2+). Residues 20–38 (CRRCGRRAFNVKKGYCAAC) form a C4-type zinc finger.

The protein belongs to the eukaryotic ribosomal protein eL37 family. It depends on Zn(2+) as a cofactor.

Functionally, binds to the 23S rRNA. This chain is Large ribosomal subunit protein eL37, found in Thermococcus gammatolerans (strain DSM 15229 / JCM 11827 / EJ3).